Reading from the N-terminus, the 726-residue chain is MPSHPNFIFRWIGLFSDKFRRQTTGIDENSNLQINGGDSSSSGSDETPVLSSVECYACTQVGVPAFHSTSCDQAHAPEWRASAGSSLVPIQEGSVPNPARTRFRRLKGPFGEVLDPRSKRVQRWNRALLLARGMALAVDPLFFYALSIGRTTGPACLYMDGAFAAVVTVLRTCLDAVHLWHVWLQFRLAYVSRESLVVGCGKLVWDPRAIASHYARSLTGFWFDVIVILPVPQAVFWLVVPKLIREEKVKLIMTILLLIFLFQFLPKIYHCICLMRRMQKVTGYIFGTIWWGFALNLIAYFIASHVAGGCWYVLAIQRVASCIRQQCMRTGNCNLSLACKEEVCYQFVSPTSTVGYPCLSGNLTSVVNKPMCLDSNGPFRYGIYRWALPVISSNSLAVKILYPIFWGLMTLSTFANDLEPTSNWLEVIFSIVMVLSGLLLFTLLIGNIQVFLHAVMAKKRKMQIRCRDMEWWMKRRQLPSRLRQRVRRFERQRWNALGGEDELELIHDLPPGLRRDIKRYLCFDLINKVPLFRGMDDLILDNICDRAKPRVFSKDEKIIREGDPVQRMIFIMRGRVKRIQSLSKGVLATSTLEPGGYLGDELLSWCLRRPFLDRLPPSSATFVCLENIEAFSLGSEDLRYITDHFRYKFANERLKRTARYYSSNWRTWAAVNIQMAWRRRRKRTRGENIGGSMSPVSENSIEGNSERRLLQYAAMFMSIRPHDHLE.

The Cytoplasmic segment spans residues 1-127 (MPSHPNFIFR…SKRVQRWNRA (127 aa)). The interval 26 to 46 (IDENSNLQINGGDSSSSGSDE) is disordered. Low complexity predominate over residues 36–45 (GGDSSSSGSD). The helical transmembrane segment at 128–148 (LLLARGMALAVDPLFFYALSI) threads the bilayer. Residues 149–162 (GRTTGPACLYMDGA) are Extracellular-facing. Residues 163-183 (FAAVVTVLRTCLDAVHLWHVW) form a helical membrane-spanning segment. Residues 184 to 219 (LQFRLAYVSRESLVVGCGKLVWDPRAIASHYARSLT) lie on the Cytoplasmic side of the membrane. The helical transmembrane segment at 220 to 240 (GFWFDVIVILPVPQAVFWLVV) threads the bilayer. The Extracellular portion of the chain corresponds to 241 to 254 (PKLIREEKVKLIMT). The helical transmembrane segment at 255–275 (ILLLIFLFQFLPKIYHCICLM) threads the bilayer. The Cytoplasmic portion of the chain corresponds to 276–282 (RRMQKVT). Residues 283-303 (GYIFGTIWWGFALNLIAYFIA) traverse the membrane as a helical segment. Residues 304–424 (SHVAGGCWYV…ANDLEPTSNW (121 aa)) lie on the Extracellular side of the membrane. The chain crosses the membrane as a helical span at residues 425-445 (LEVIFSIVMVLSGLLLFTLLI). Topologically, residues 446–726 (GNIQVFLHAV…MSIRPHDHLE (281 aa)) are cytoplasmic. Residues 531–661 (LFRG…ARYY) and aspartate 600 contribute to the a nucleoside 3',5'-cyclic phosphate site. Positions 645–661 (FRYKFANERLKRTARYY) are calmodulin-binding. The IQ domain occupies 666 to 695 (RTWAAVNIQMAWRRRRKRTRGENIGGSMSP).

The protein belongs to the cyclic nucleotide-gated cation channel (TC 1.A.1.5) family. Homotetramer or heterotetramer (Potential). Binds calmodulin-1/4 with a higher affinity than calmodulin-2/3/5. As to expression, expressed in the whole plant but only weakly in roots. Strongly expressed in the expanded cotyledons of 14-day-old seedlings and detected later in leaves after the transition to flowering. Also detected in flowers during organ senescence and in the dehiscence zone of siliques.

The protein resides in the cell membrane. Its function is as follows. Acts as a cyclic nucleotide-gated ion channel. Permeable to potassium and calcium in a cyclic nucleotide-dependent fashion (cAMP or cGMP). Could also transport lithium, cesium and rubium and displays a strong selectivity against sodium. Seems to directly participate in pathogen-induced calcium influx. May function in homeostasis, re-establishing ionic balance after defense action and/or other stimuli. Could mediate the initiation of the developmentally regulated cell death programs. This is Cyclic nucleotide-gated ion channel 2 (CNGC2) from Arabidopsis thaliana (Mouse-ear cress).